The primary structure comprises 86 residues: UPF0125 protein bbp_234 (86 aa).

This sequence belongs to the UPF0125 (RnfH) family.

The chain is UPF0125 protein bbp_234 from Buchnera aphidicola subsp. Baizongia pistaciae (strain Bp).